A 359-amino-acid chain; its full sequence is 3-dehydroquinate synthase (359 aa).

Residues 72–77 (EGEIHK), 106–110 (GVIGD), 130–131 (TS), K143, K152, and 170–173 (CLKT) each bind NAD(+). Zn(2+)-binding residues include E185, H248, and H264.

It belongs to the sugar phosphate cyclases superfamily. Dehydroquinate synthase family. The cofactor is Co(2+). Requires Zn(2+) as cofactor. NAD(+) is required as a cofactor.

The protein resides in the cytoplasm. It catalyses the reaction 7-phospho-2-dehydro-3-deoxy-D-arabino-heptonate = 3-dehydroquinate + phosphate. It participates in metabolic intermediate biosynthesis; chorismate biosynthesis; chorismate from D-erythrose 4-phosphate and phosphoenolpyruvate: step 2/7. In terms of biological role, catalyzes the conversion of 3-deoxy-D-arabino-heptulosonate 7-phosphate (DAHP) to dehydroquinate (DHQ). The sequence is that of 3-dehydroquinate synthase from Dehalococcoides mccartyi (strain ATCC BAA-2100 / JCM 16839 / KCTC 5957 / BAV1).